Here is a 72-residue protein sequence, read N- to C-terminus: 3-deoxy-manno-octulosonate cytidylyltransferase (72 aa).

The protein belongs to the KdsB family. Homodimer.

The protein localises to the cytoplasm. The catalysed reaction is 3-deoxy-alpha-D-manno-oct-2-ulosonate + CTP = CMP-3-deoxy-beta-D-manno-octulosonate + diphosphate. It participates in nucleotide-sugar biosynthesis; CMP-3-deoxy-D-manno-octulosonate biosynthesis; CMP-3-deoxy-D-manno-octulosonate from 3-deoxy-D-manno-octulosonate and CTP: step 1/1. Its pathway is bacterial outer membrane biogenesis; lipopolysaccharide biosynthesis. Its function is as follows. Activates KDO (a required 8-carbon sugar) for incorporation into bacterial lipopolysaccharide in Gram-negative bacteria. This chain is 3-deoxy-manno-octulosonate cytidylyltransferase (kpsU), found in Escherichia coli.